We begin with the raw amino-acid sequence, 250 residues long: 2,3-bisphosphoglycerate-dependent phosphoglycerate mutase (250 aa).

Substrate contacts are provided by residues Arg8–Asn15, Thr21–Gly22, Arg60, Glu87–Tyr90, Lys98, Arg114–Arg115, and Gly183–Asn184. Residue His9 is the Tele-phosphohistidine intermediate of the active site. The active-site Proton donor/acceptor is the Glu87.

Belongs to the phosphoglycerate mutase family. BPG-dependent PGAM subfamily. As to quaternary structure, homodimer.

It carries out the reaction (2R)-2-phosphoglycerate = (2R)-3-phosphoglycerate. The protein operates within carbohydrate degradation; glycolysis; pyruvate from D-glyceraldehyde 3-phosphate: step 3/5. Its function is as follows. Catalyzes the interconversion of 2-phosphoglycerate and 3-phosphoglycerate. The polypeptide is 2,3-bisphosphoglycerate-dependent phosphoglycerate mutase (Bordetella petrii (strain ATCC BAA-461 / DSM 12804 / CCUG 43448)).